A 333-amino-acid polypeptide reads, in one-letter code: MADASSRTDTSTVLDTDDKNQMVDGQSGAIVPSNSSDRSDRSDKPMDQKVLRRLAQNREAARKSRLRKKAYVQQLESSKLKLASLEQEINKARQQGIYISSSGDQTHAMSGNGAMTFDLEYARWLEEQNKQINELRTAVNAHASDSDLRLIVDGIMAHYDEIFRLKGVAAKADVFHILSGMWKTPAERCFLWLGGFRSSELLKLLVNQLEPLTEQQLLGLSNLQQSSQQAEDALSQGMEALQQSLADTLAGSLGPSGSSGNVANYMGQMAMAMGKLGTLENFLRQADNLRQQTLHQMQRILTIRQAARALLAIHDYFSRLRALSSLWLARPRE.

Residues 1-14 (MADASSRTDTSTVL) show a composition bias toward polar residues. The disordered stretch occupies residues 1–48 (MADASSRTDTSTVLDTDDKNQMVDGQSGAIVPSNSSDRSDRSDKPMDQ). Over residues 37–48 (DRSDRSDKPMDQ) the composition is skewed to basic and acidic residues. Residues 47 to 91 (DQKVLRRLAQNREAARKSRLRKKAYVQQLESSKLKLASLEQEINK) form the bZIP domain. The basic motif stretch occupies residues 49 to 69 (KVLRRLAQNREAARKSRLRKK). Residues 75–89 (LESSKLKLASLEQEI) form a leucine-zipper region. The DOG1 domain occupies 114-330 (AMTFDLEYAR…RALSSLWLAR (217 aa)).

Belongs to the bZIP family. In terms of assembly, interacts with NPR1/NH1. Interacts with NPR3/NH3.

It is found in the nucleus. Its function is as follows. Transcriptional regulator involved in defense response. The protein is Transcription factor TGA2.2 of Oryza sativa subsp. japonica (Rice).